The following is a 299-amino-acid chain: Protoheme IX farnesyltransferase (299 aa).

The next 9 helical transmembrane spans lie at 25-45 (VVVLMLITSLVGMFLASRAGV), 47-67 (WTVLLFGNLGIGLCAGAAAAV), 95-115 (LAALGFALALAVAGMALLLTF), 119-139 (LAAWLTLASLLGYAVLYTGFL), 147-167 (IVIGGLAGAAPPLLGWVAVSG), 173-193 (PLLLVLIVFTWTPPHFWALAI), 218-238 (LHILLYTLALLAVTLLPYAIH), 243-263 (LYLLCALLLGGRFLHWAWALY), and 279-299 (IRYLFLLFIALLVDHYLPLTL).

This sequence belongs to the UbiA prenyltransferase family. Protoheme IX farnesyltransferase subfamily.

It is found in the cell inner membrane. It carries out the reaction heme b + (2E,6E)-farnesyl diphosphate + H2O = Fe(II)-heme o + diphosphate. It participates in porphyrin-containing compound metabolism; heme O biosynthesis; heme O from protoheme: step 1/1. Functionally, converts heme B (protoheme IX) to heme O by substitution of the vinyl group on carbon 2 of heme B porphyrin ring with a hydroxyethyl farnesyl side group. This Azotobacter vinelandii (strain DJ / ATCC BAA-1303) protein is Protoheme IX farnesyltransferase.